A 417-amino-acid polypeptide reads, in one-letter code: Serine hydroxymethyltransferase (417 aa).

Residues leucine 121 and 125-127 contribute to the (6S)-5,6,7,8-tetrahydrofolate site; that span reads GHL. Lysine 229 is subject to N6-(pyridoxal phosphate)lysine. 355–357 contacts (6S)-5,6,7,8-tetrahydrofolate; it reads SPF.

It belongs to the SHMT family. In terms of assembly, homodimer. It depends on pyridoxal 5'-phosphate as a cofactor.

The protein localises to the cytoplasm. The enzyme catalyses (6R)-5,10-methylene-5,6,7,8-tetrahydrofolate + glycine + H2O = (6S)-5,6,7,8-tetrahydrofolate + L-serine. It participates in one-carbon metabolism; tetrahydrofolate interconversion. Its pathway is amino-acid biosynthesis; glycine biosynthesis; glycine from L-serine: step 1/1. Catalyzes the reversible interconversion of serine and glycine with tetrahydrofolate (THF) serving as the one-carbon carrier. This reaction serves as the major source of one-carbon groups required for the biosynthesis of purines, thymidylate, methionine, and other important biomolecules. Also exhibits THF-independent aldolase activity toward beta-hydroxyamino acids, producing glycine and aldehydes, via a retro-aldol mechanism. In Sodalis glossinidius (strain morsitans), this protein is Serine hydroxymethyltransferase.